Consider the following 200-residue polypeptide: Methylthioribulose-1-phosphate dehydratase-like protein (200 aa).

It belongs to the aldolase class II family. MtnB subfamily.

This is Methylthioribulose-1-phosphate dehydratase-like protein from Schizosaccharomyces pombe (strain 972 / ATCC 24843) (Fission yeast).